Consider the following 125-residue polypeptide: Snaclec coagulation factor IX/factor X-binding protein subunit B (125 aa).

The C-type lectin domain occupies 1–122 (DCSSGWTAYG…SLFGHFVCKS (122 aa)). Cystine bridges form between cysteine 2–cysteine 13, cysteine 30–cysteine 120, and cysteine 97–cysteine 112. The Ca(2+) site is built by serine 41 and glutamate 47.

This sequence belongs to the snaclec family. As to quaternary structure, heterodimer of subunits A and B; disulfide-linked. Expressed by the venom gland.

It is found in the secreted. Its function is as follows. Anticoagulant protein which binds to coagulation factor IX (F9) and coagulation factor X (F10) in the presence of calcium. It may bind the gamma-carboxyglutamic acid-domain regions of factors with a 1 to 1 stoichiometry. The dissociation constant (K(d)) are 6.6 nM for factor IX (F9) and 125 nM for factor X (F10). Does not bind carbohydrates. This is Snaclec coagulation factor IX/factor X-binding protein subunit B from Echis carinatus (Saw-scaled viper).